The chain runs to 243 residues: Ribonuclease 3 (243 aa).

The region spanning 10 to 146 is the RNase III domain; the sequence is VNRFRKRFDT…FIGALYLDQG (137 aa). Glu59 serves as a coordination point for Mg(2+). Asp63 is a catalytic residue. 2 residues coordinate Mg(2+): Asp132 and Glu135. Glu135 is an active-site residue. In terms of domain architecture, DRBM spans 172-241; it reads DFKTQFQEYV…AKSAYKQLKQ (70 aa). Basic and acidic residues predominate over residues 219 to 231; the sequence is GKGKTKKESEQRA. Residues 219-243 are disordered; sequence GKGKTKKESEQRAAKSAYKQLKQIK.

It belongs to the ribonuclease III family. As to quaternary structure, homodimer. It depends on Mg(2+) as a cofactor.

It is found in the cytoplasm. It carries out the reaction Endonucleolytic cleavage to 5'-phosphomonoester.. In terms of biological role, digests double-stranded RNA. Involved in the processing of primary rRNA transcript to yield the immediate precursors to the large and small rRNAs (23S and 16S). Processes some mRNAs, and tRNAs when they are encoded in the rRNA operon. Processes pre-crRNA and tracrRNA of type II CRISPR loci if present in the organism. The chain is Ribonuclease 3 from Staphylococcus aureus (strain Mu3 / ATCC 700698).